A 650-amino-acid chain; its full sequence is Probable LIM domain-containing serine/threonine-protein kinase DDB_G0287001 (650 aa).

2 LIM zinc-binding domains span residues 4–63 (NNCG…KLNA) and 64–122 (RKCF…PSDK). Disordered regions lie at residues 118-138 (KPSD…LPGK), 171-197 (LSSS…SSFM), and 293-320 (LLNS…NLNT). Gly residues predominate over residues 173–188 (SSGGSGNSISGSGGTN). The Protein kinase domain maps to 386–643 (VAFGDVIASG…DTLKKISESL (258 aa)). Residues 392–400 (IASGASGKV) and Lys413 contribute to the ATP site. Asp509 acts as the Proton acceptor in catalysis.

The protein belongs to the protein kinase superfamily. TKL Ser/Thr protein kinase family.

It carries out the reaction L-seryl-[protein] + ATP = O-phospho-L-seryl-[protein] + ADP + H(+). The enzyme catalyses L-threonyl-[protein] + ATP = O-phospho-L-threonyl-[protein] + ADP + H(+). The chain is Probable LIM domain-containing serine/threonine-protein kinase DDB_G0287001 from Dictyostelium discoideum (Social amoeba).